The chain runs to 263 residues: Tryptophan synthase alpha chain (263 aa).

Active-site proton acceptor residues include Glu51 and Asp62.

The protein belongs to the TrpA family. In terms of assembly, tetramer of two alpha and two beta chains.

It carries out the reaction (1S,2R)-1-C-(indol-3-yl)glycerol 3-phosphate + L-serine = D-glyceraldehyde 3-phosphate + L-tryptophan + H2O. The protein operates within amino-acid biosynthesis; L-tryptophan biosynthesis; L-tryptophan from chorismate: step 5/5. In terms of biological role, the alpha subunit is responsible for the aldol cleavage of indoleglycerol phosphate to indole and glyceraldehyde 3-phosphate. The polypeptide is Tryptophan synthase alpha chain (Methanosarcina barkeri (strain Fusaro / DSM 804)).